We begin with the raw amino-acid sequence, 259 residues long: 5'-nucleotidase SurE (259 aa).

A divalent metal cation-binding residues include Asp-15, Asp-16, Ser-46, and Asn-102.

Belongs to the SurE nucleotidase family. The cofactor is a divalent metal cation.

It is found in the cytoplasm. It catalyses the reaction a ribonucleoside 5'-phosphate + H2O = a ribonucleoside + phosphate. Nucleotidase that shows phosphatase activity on nucleoside 5'-monophosphates. This chain is 5'-nucleotidase SurE, found in Chlorobium luteolum (strain DSM 273 / BCRC 81028 / 2530) (Pelodictyon luteolum).